The sequence spans 167 residues: Phospholipase A and acyltransferase 1 (167 aa).

The Cytoplasmic portion of the chain corresponds to 1–138 (MAVNDCFSLT…GEGVSEQANR (138 aa)). The 116-residue stretch at 20–135 (LIEVFRPCYQ…LRYGEGVSEQ (116 aa)) folds into the LRAT domain. Histidine 30 is a catalytic residue. The Acyl-thioester intermediate role is filled by cysteine 119. A helical transmembrane segment spans residues 139–159 (AIGTIGLVAAGIDIFTFLGLF). The Lumenal portion of the chain corresponds to 160–167 (PKRQRTKY).

This sequence belongs to the H-rev107 family. In terms of tissue distribution, expressed in skeletal muscle, heart, brain, bone marrow and testis. Abundantly expressed in brain, heart, and skeletal muscle.

It is found in the membrane. Its subcellular location is the cytoplasm. The protein resides in the nucleus. It catalyses the reaction a 1,2-diacyl-sn-glycero-3-phosphocholine + H2O = a 1-acyl-sn-glycero-3-phosphocholine + a fatty acid + H(+). The catalysed reaction is a 1,2-diacyl-sn-glycero-3-phosphocholine + H2O = a 2-acyl-sn-glycero-3-phosphocholine + a fatty acid + H(+). It carries out the reaction 1,2-dihexadecanoyl-sn-glycero-3-phosphocholine + H2O = 2-hexadecanoyl-sn-glycero-3-phosphocholine + hexadecanoate + H(+). The enzyme catalyses 1,2-dihexadecanoyl-sn-glycero-3-phosphocholine + H2O = 1-hexadecanoyl-sn-glycero-3-phosphocholine + hexadecanoate + H(+). It catalyses the reaction 1-hexadecanoyl-2-(5Z,8Z,11Z,14Z-eicosatetraenoyl)-sn-glycero-3-phosphoethanolamine + H2O = 2-(5Z,8Z,11Z,14Z)-eicosatetraenoyl-sn-glycero-3-phosphoethanolamine + hexadecanoate + H(+). The catalysed reaction is 1-hexadecanoyl-2-(5Z,8Z,11Z,14Z-eicosatetraenoyl)-sn-glycero-3-phosphoethanolamine + H2O = 1-hexadecanoyl-sn-glycero-3-phosphoethanolamine + (5Z,8Z,11Z,14Z)-eicosatetraenoate + H(+). It carries out the reaction 1,2-di-(9Z-octadecenoyl)-sn-glycero-3-phosphoethanolamine + 1,2-dihexadecanoyl-sn-glycero-3-phosphocholine = hexadecanoyl-sn-glycero-3-phosphocholine + N-hexadecanoyl-1,2-di-(9Z-octadecenoyl)-sn-glycero-3-phosphoethanolamine + H(+). The enzyme catalyses 1,2-dihexadecanoyl-sn-glycero-3-phosphocholine + a 2-acyl-sn-glycero-3-phosphocholine = a 1-hexadecanoyl-2-acyl-sn-glycero-3-phosphocholine + 2-hexadecanoyl-sn-glycero-3-phosphocholine. Exhibits both phospholipase A1/2 and acyltransferase activities. Shows phospholipase A1 (PLA1) and A2 (PLA2) activity, catalyzing the calcium-independent release of fatty acids from the sn-1 or sn-2 position of glycerophospholipids. Shows O-acyltransferase activity, catalyzing the transfer of a fatty acyl group from glycerophospholipid to the hydroxyl group of lysophospholipid. Shows N-acyltransferase activity, catalyzing the calcium-independent transfer of a fatty acyl group at the sn-1 position of phosphatidylcholine (PC) and other glycerophospholipids to the primary amine of phosphatidylethanolamine (PE), forming N-acylphosphatidylethanolamine (NAPE), which serves as precursor for N-acylethanolamines (NAEs). In Mus musculus (Mouse), this protein is Phospholipase A and acyltransferase 1.